The primary structure comprises 379 residues: Dual-specificity RNA methyltransferase RlmN (379 aa).

The Proton acceptor role is filled by Glu-97. The region spanning 103–343 (QGGRGTLCVS…VRTTRGDDID (241 aa)) is the Radical SAM core domain. Cys-110 and Cys-346 are disulfide-bonded. Cys-117, Cys-121, and Cys-124 together coordinate [4Fe-4S] cluster. S-adenosyl-L-methionine is bound by residues 171–172 (GE), Ser-203, 225–227 (SLH), and Asn-303. Cys-346 functions as the S-methylcysteine intermediate in the catalytic mechanism.

It belongs to the radical SAM superfamily. RlmN family. [4Fe-4S] cluster is required as a cofactor.

Its subcellular location is the cytoplasm. It carries out the reaction adenosine(2503) in 23S rRNA + 2 reduced [2Fe-2S]-[ferredoxin] + 2 S-adenosyl-L-methionine = 2-methyladenosine(2503) in 23S rRNA + 5'-deoxyadenosine + L-methionine + 2 oxidized [2Fe-2S]-[ferredoxin] + S-adenosyl-L-homocysteine. The enzyme catalyses adenosine(37) in tRNA + 2 reduced [2Fe-2S]-[ferredoxin] + 2 S-adenosyl-L-methionine = 2-methyladenosine(37) in tRNA + 5'-deoxyadenosine + L-methionine + 2 oxidized [2Fe-2S]-[ferredoxin] + S-adenosyl-L-homocysteine. In terms of biological role, specifically methylates position 2 of adenine 2503 in 23S rRNA and position 2 of adenine 37 in tRNAs. m2A2503 modification seems to play a crucial role in the proofreading step occurring at the peptidyl transferase center and thus would serve to optimize ribosomal fidelity. This is Dual-specificity RNA methyltransferase RlmN from Pseudomonas aeruginosa (strain ATCC 15692 / DSM 22644 / CIP 104116 / JCM 14847 / LMG 12228 / 1C / PRS 101 / PAO1).